The following is an 89-amino-acid chain: Small ribosomal subunit protein uS15 (89 aa).

It belongs to the universal ribosomal protein uS15 family. Part of the 30S ribosomal subunit. Forms a bridge to the 50S subunit in the 70S ribosome, contacting the 23S rRNA.

One of the primary rRNA binding proteins, it binds directly to 16S rRNA where it helps nucleate assembly of the platform of the 30S subunit by binding and bridging several RNA helices of the 16S rRNA. Functionally, forms an intersubunit bridge (bridge B4) with the 23S rRNA of the 50S subunit in the ribosome. The protein is Small ribosomal subunit protein uS15 of Mycobacterium bovis (strain ATCC BAA-935 / AF2122/97).